The following is a 150-amino-acid chain: Large ribosomal subunit protein bL9 (150 aa).

Belongs to the bacterial ribosomal protein bL9 family.

Its function is as follows. Binds to the 23S rRNA. This chain is Large ribosomal subunit protein bL9, found in Ralstonia pickettii (strain 12J).